The sequence spans 281 residues: MLRVAVPNKGSLSETATSILKEAGYATRGDSKSLTIADEDNGVEFYFLRPKDIAIYIASGHLDIGITGRDLAADTREEVDELLALGFGASTFRYAAPKDENWTVEQLAGKRIATSYPNLVRKDLANRGLEAQVIRLDGAVEISIRLGVADVIADVVSTGRTLRQQGLKPFGDPLCVSEAVIVGRKGAEVTAEQSVLIKRIQGILHAHNYVMLDYNVARENLDKVAAITPGLSAPTVSPLANDSWVAVRAMVPKTQANSLMDELSALGAEAILATDIRIARI.

This sequence belongs to the ATP phosphoribosyltransferase family. Long subfamily. The cofactor is Mg(2+).

It localises to the cytoplasm. The enzyme catalyses 1-(5-phospho-beta-D-ribosyl)-ATP + diphosphate = 5-phospho-alpha-D-ribose 1-diphosphate + ATP. Its pathway is amino-acid biosynthesis; L-histidine biosynthesis; L-histidine from 5-phospho-alpha-D-ribose 1-diphosphate: step 1/9. With respect to regulation, feedback inhibited by histidine. In terms of biological role, catalyzes the condensation of ATP and 5-phosphoribose 1-diphosphate to form N'-(5'-phosphoribosyl)-ATP (PR-ATP). Has a crucial role in the pathway because the rate of histidine biosynthesis seems to be controlled primarily by regulation of HisG enzymatic activity. This Corynebacterium jeikeium (strain K411) protein is ATP phosphoribosyltransferase.